The sequence spans 422 residues: Dihydroorotase (422 aa).

Residues H59 and H61 each contribute to the Zn(2+) site. Substrate-binding positions include 61–63 (HFR) and N93. Zn(2+) is bound by residues D150, H177, and H230. N276 lines the substrate pocket. D303 contacts Zn(2+). D303 is an active-site residue. H307 serves as a coordination point for substrate.

Belongs to the metallo-dependent hydrolases superfamily. DHOase family. Class I DHOase subfamily. Zn(2+) serves as cofactor.

The enzyme catalyses (S)-dihydroorotate + H2O = N-carbamoyl-L-aspartate + H(+). The protein operates within pyrimidine metabolism; UMP biosynthesis via de novo pathway; (S)-dihydroorotate from bicarbonate: step 3/3. Catalyzes the reversible cyclization of carbamoyl aspartate to dihydroorotate. The protein is Dihydroorotase of Streptococcus thermophilus (strain CNRZ 1066).